The following is a 162-amino-acid chain: Small ribosomal subunit protein uS12m (162 aa).

A mitochondrion-targeting transit peptide spans 1–37 (MIRFAQYARYPVISRLMKPTVISPFQAQAFSSSSVML).

The protein belongs to the universal ribosomal protein uS12 family. Component of the mitochondrial small ribosomal subunit (mt-SSU). Mature yeast 74S mitochondrial ribosomes consist of a small (37S) and a large (54S) subunit. The 37S small subunit contains a 15S ribosomal RNA (15S mt-rRNA) and at least 32 different proteins. The 54S large subunit contains a 21S rRNA (21S mt-rRNA) and at least 45 different proteins. uS12m forms part of the decoding center of the mt-SSU.

It is found in the mitochondrion. Functionally, component of the mitochondrial ribosome (mitoribosome), a dedicated translation machinery responsible for the synthesis of mitochondrial genome-encoded proteins, including at least some of the essential transmembrane subunits of the mitochondrial respiratory chain. The mitoribosomes are attached to the mitochondrial inner membrane and translation products are cotranslationally integrated into the membrane. uS12m is required for respiratory growth. The chain is Small ribosomal subunit protein uS12m from Schizosaccharomyces pombe (strain 972 / ATCC 24843) (Fission yeast).